Consider the following 587-residue polypeptide: Prolycopene isomerase 1, chloroplastic (587 aa).

Positions 1-13 (MLCLSLNSSSTSP) are enriched in low complexity. A disordered region spans residues 1 to 21 (MLCLSLNSSSTSPPKSPLHHS). The N-terminal 50 residues, 1-50 (MLCLSLNSSSTSPPKSPLHHSFSRRSMRSWVCSPRVQRKKLGFWSSPKAV), are a transit peptide targeting the chloroplast.

Belongs to the carotenoid/retinoid oxidoreductase family. CrtISO subfamily. NAD(+) is required as a cofactor. The cofactor is NADP(+). FAD serves as cofactor. Up-regulated in the flower buds and flower lip tissue, while it is weakly expressed in leaves.

It is found in the plastid. The protein resides in the chloroplast membrane. It catalyses the reaction 7,7',9,9'-tetra-cis-lycopene = all-trans-lycopene. The protein operates within carotenoid biosynthesis; lycopene biosynthesis. Its function is as follows. Carotene cis-trans-isomerase that converts 7,9,9'-tri-cis-neurosporene to 9'-cis-neurosporene and 7,9,9',7'-tetra-cis-lycopene (also known as prolycopene) into all-trans-lycopene. Isomerization requires redox-active components, suggesting that isomerization is achieved by a reversible redox reaction acting at specific double bonds. Isomerizes adjacent cis-double bonds at C7 and C9 pairwise into the trans-configuration, but is incapable of isomerizing single cis-double bonds at C9 and C9'. The protein is Prolycopene isomerase 1, chloroplastic (CRTISO1) of Oncidium hybrid cultivar (Orchid).